The primary structure comprises 270 residues: 4-hydroxy-tetrahydrodipicolinate reductase (270 aa).

NAD(+) is bound at residue 7-12 (GANGRM). Arg-34 is an NADP(+) binding site. Residues 97-99 (GTT) and 121-124 (SGNM) contribute to the NAD(+) site. Catalysis depends on His-155, which acts as the Proton donor/acceptor. His-156 lines the (S)-2,3,4,5-tetrahydrodipicolinate pocket. Residue Lys-159 is the Proton donor of the active site. Position 165-166 (165-166 (GT)) interacts with (S)-2,3,4,5-tetrahydrodipicolinate.

The protein belongs to the DapB family.

The protein resides in the cytoplasm. The catalysed reaction is (S)-2,3,4,5-tetrahydrodipicolinate + NAD(+) + H2O = (2S,4S)-4-hydroxy-2,3,4,5-tetrahydrodipicolinate + NADH + H(+). It carries out the reaction (S)-2,3,4,5-tetrahydrodipicolinate + NADP(+) + H2O = (2S,4S)-4-hydroxy-2,3,4,5-tetrahydrodipicolinate + NADPH + H(+). It participates in amino-acid biosynthesis; L-lysine biosynthesis via DAP pathway; (S)-tetrahydrodipicolinate from L-aspartate: step 4/4. Its function is as follows. Catalyzes the conversion of 4-hydroxy-tetrahydrodipicolinate (HTPA) to tetrahydrodipicolinate. In Bartonella tribocorum (strain CIP 105476 / IBS 506), this protein is 4-hydroxy-tetrahydrodipicolinate reductase.